The sequence spans 270 residues: CASP-like protein 4A1 (270 aa).

A disordered region spans residues 1 to 110 (MEELEKTQKF…PSFSSSSSTP (110 aa)). Over 1–121 (MEELEKTQKF…ESKWASLIRK (121 aa)) the chain is Cytoplasmic. The span at 24 to 66 (SSPINFEMSSRSSLHSLPQTTIESPPDSPTLSSIPDSHGSSPH) shows a compositional bias: polar residues. The span at 85–97 (NGEEEKKVSESRR) shows a compositional bias: basic and acidic residues. Positions 100 to 110 (RPSFSSSSSTP) are enriched in low complexity. Residues 122–142 (ALLGFRVIAFVSCLVSFSVMV) form a helical membrane-spanning segment. The Extracellular portion of the chain corresponds to 143–161 (SDRDKGWAHDSFYNYKEFR). A helical transmembrane segment spans residues 162 to 182 (FCLAANVIGFVYSGFMICDLV). The Cytoplasmic portion of the chain corresponds to 183-198 (YLLSTSIRRSRHNLRH). A helical membrane pass occupies residues 199–221 (FLEFGLDQMLAYLLASASTSASI). The Extracellular segment spans residues 222 to 246 (RVDDWQSNWGADKFPDLARASVALS). The chain crosses the membrane as a helical span at residues 247-267 (YVSFVAFAFCSLASGYALCAL). Residues 268 to 270 (RSI) are Cytoplasmic-facing.

This sequence belongs to the Casparian strip membrane proteins (CASP) family. Homodimer and heterodimers.

It is found in the cell membrane. In Arabidopsis thaliana (Mouse-ear cress), this protein is CASP-like protein 4A1.